Consider the following 358-residue polypeptide: tRNA-specific 2-thiouridylase MnmA (358 aa).

Residues 8 to 15 and methionine 34 each bind ATP; that span reads GLSGGVDS. An interaction with target base in tRNA region spans residues 94 to 96; the sequence is NPD. Cysteine 99 serves as the catalytic Nucleophile. Residues cysteine 99 and cysteine 196 are joined by a disulfide bond. Residue glycine 123 coordinates ATP. An interaction with tRNA region spans residues 146–148; it reads KDQ. Cysteine 196 serves as the catalytic Cysteine persulfide intermediate. The interaction with tRNA stretch occupies residues 308 to 309; the sequence is RY.

It belongs to the MnmA/TRMU family.

The protein localises to the cytoplasm. It catalyses the reaction S-sulfanyl-L-cysteinyl-[protein] + uridine(34) in tRNA + AH2 + ATP = 2-thiouridine(34) in tRNA + L-cysteinyl-[protein] + A + AMP + diphosphate + H(+). Catalyzes the 2-thiolation of uridine at the wobble position (U34) of tRNA, leading to the formation of s(2)U34. This chain is tRNA-specific 2-thiouridylase MnmA, found in Thiobacillus denitrificans (strain ATCC 25259 / T1).